Here is a 419-residue protein sequence, read N- to C-terminus: [Butirosin acyl-carrier protein]--L-glutamate ligase (419 aa).

The 202-residue stretch at 144–345 (RRLMERNGFN…FVESRVLVFN (202 aa)) folds into the ATP-grasp domain. Residue 174-231 (ISAGFSKCVLKVPYGSSGKGLKVIDNERNFRFLLNYIQNRQTNVDLLLEGWHPHRLSL) participates in ATP binding. Asp-298, Glu-312, and Asn-314 together coordinate Mg(2+). Asp-298, Glu-312, and Asn-314 together coordinate Mn(2+).

As to quaternary structure, monomer. Mg(2+) is required as a cofactor. The cofactor is Mn(2+).

The enzyme catalyses holo-[BtrI ACP] + L-glutamate + ATP = gamma-L-glutamyl-[BtrI ACP] + ADP + phosphate. It catalyses the reaction 4-aminobutanoyl-[BtrI ACP] + L-glutamate + ATP = 4-(gamma-L-glutamylamino)butanoyl-[BtrI ACP] + ADP + phosphate + H(+). Its pathway is antibiotic biosynthesis; butirosin biosynthesis. In terms of biological role, ATP-dependent ligase that catalyzes 2 steps in the biosynthesis of the side chain of the aminoglycoside antibiotics in the biosynthetic pathway of butirosin. Mediates the addition of one molecule of L-glutamate to a dedicated acyl-carrier protein. Following decarboxylation of the product by BtrK, adds a second L-glutamate molecule. The sequence is that of [Butirosin acyl-carrier protein]--L-glutamate ligase (btrJ) from Niallia circulans (Bacillus circulans).